We begin with the raw amino-acid sequence, 405 residues long: UDP-N-acetylglucosamine--N-acetylmuramyl-(pentapeptide) pyrophosphoryl-undecaprenol N-acetylglucosamine transferase (405 aa).

Residues threonine 11–glycine 13, asparagine 127, arginine 168, serine 191, isoleucine 248, and glutamine 293 contribute to the UDP-N-acetyl-alpha-D-glucosamine site.

Belongs to the glycosyltransferase 28 family. MurG subfamily.

It is found in the cell inner membrane. The enzyme catalyses di-trans,octa-cis-undecaprenyl diphospho-N-acetyl-alpha-D-muramoyl-L-alanyl-D-glutamyl-meso-2,6-diaminopimeloyl-D-alanyl-D-alanine + UDP-N-acetyl-alpha-D-glucosamine = di-trans,octa-cis-undecaprenyl diphospho-[N-acetyl-alpha-D-glucosaminyl-(1-&gt;4)]-N-acetyl-alpha-D-muramoyl-L-alanyl-D-glutamyl-meso-2,6-diaminopimeloyl-D-alanyl-D-alanine + UDP + H(+). The protein operates within cell wall biogenesis; peptidoglycan biosynthesis. Cell wall formation. Catalyzes the transfer of a GlcNAc subunit on undecaprenyl-pyrophosphoryl-MurNAc-pentapeptide (lipid intermediate I) to form undecaprenyl-pyrophosphoryl-MurNAc-(pentapeptide)GlcNAc (lipid intermediate II). The chain is UDP-N-acetylglucosamine--N-acetylmuramyl-(pentapeptide) pyrophosphoryl-undecaprenol N-acetylglucosamine transferase from Sorangium cellulosum (strain So ce56) (Polyangium cellulosum (strain So ce56)).